Reading from the N-terminus, the 161-residue chain is Nucleotide-binding protein amb3630 (161 aa).

The protein belongs to the YajQ family.

Nucleotide-binding protein. In Paramagnetospirillum magneticum (strain ATCC 700264 / AMB-1) (Magnetospirillum magneticum), this protein is Nucleotide-binding protein amb3630.